We begin with the raw amino-acid sequence, 157 residues long: Protein Smg homolog (157 aa).

This sequence belongs to the Smg family.

The sequence is that of Protein Smg homolog from Shewanella putrefaciens (strain CN-32 / ATCC BAA-453).